Reading from the N-terminus, the 180-residue chain is Cytidylate kinase (180 aa).

Residue 7 to 15 (GPPGSGKST) coordinates ATP.

The protein belongs to the cytidylate kinase family. Type 2 subfamily.

Its subcellular location is the cytoplasm. The enzyme catalyses CMP + ATP = CDP + ADP. It catalyses the reaction dCMP + ATP = dCDP + ADP. This chain is Cytidylate kinase, found in Sulfurisphaera tokodaii (strain DSM 16993 / JCM 10545 / NBRC 100140 / 7) (Sulfolobus tokodaii).